The sequence spans 113 residues: UPF0212 protein AF_0282 (113 aa).

It belongs to the UPF0212 family.

The protein is UPF0212 protein AF_0282 of Archaeoglobus fulgidus (strain ATCC 49558 / DSM 4304 / JCM 9628 / NBRC 100126 / VC-16).